A 124-amino-acid chain; its full sequence is MGTSLRSQSFREPRPSYGRLHESQGRSLDGRLHRALSLRLGREKSRSQVPDGTEGLEVSVQERLPGTLGDKEQLIQGQRGGGSRRWLRQYQQHVKRRWRSFVASFPSVTLSQPASPETLLDTNN.

Residues Met1–Leu28 form a disordered region. Over residues Ser9 to Leu28 the composition is skewed to basic and acidic residues.

This is an uncharacterized protein from Mus musculus (Mouse).